The following is a 211-amino-acid chain: N-(5'-phosphoribosyl)anthranilate isomerase (211 aa).

The protein belongs to the TrpF family.

The enzyme catalyses N-(5-phospho-beta-D-ribosyl)anthranilate = 1-(2-carboxyphenylamino)-1-deoxy-D-ribulose 5-phosphate. It functions in the pathway amino-acid biosynthesis; L-tryptophan biosynthesis; L-tryptophan from chorismate: step 3/5. This is N-(5'-phosphoribosyl)anthranilate isomerase from Pseudomonas aeruginosa (strain UCBPP-PA14).